A 166-amino-acid chain; its full sequence is Holin-like protein TcdE (166 aa).

The next 4 membrane-spanning stretches (helical) occupy residues 15 to 35, 36 to 56, 77 to 97, and 111 to 131; these read IFFYINLGGVMNMTISFLSEH, IFIKLVILTISFDTLLGCLSA, MIACIFFLSVVDILTKFNFLF, and HLGISEFFSILFILYESVSIL.

Belongs to the bacteriophage holin family. As to quaternary structure, homomultimer.

Its subcellular location is the cell membrane. Functionally, holin-like protein required for secretion of toxins A and B (TcdA and TcdB). Facilitates the release of toxins to the extracellular environment without causing the bacterial cell lysis. Has weak activity, suggesting that it may act as a antiholin when multiple forms are produced. The chain is Holin-like protein TcdE from Clostridioides difficile (Peptoclostridium difficile).